The chain runs to 874 residues: Probable inorganic carbon transporter subunit DabA (874 aa).

C398, D400, H580, and C595 together coordinate Zn(2+).

It belongs to the inorganic carbon transporter (TC 9.A.2) DabA family. Forms a complex with DabB. Zn(2+) is required as a cofactor.

It is found in the cell membrane. Its function is as follows. Part of an energy-coupled inorganic carbon pump. This Bacillus anthracis (strain A0248) protein is Probable inorganic carbon transporter subunit DabA.